We begin with the raw amino-acid sequence, 151 residues long: Single-stranded DNA-binding protein, mitochondrial (151 aa).

A mitochondrion-targeting transit peptide spans M1–Q16. Residues L30–S141 form the SSB domain. Phosphoserine occurs at positions 67 and 79. K113 is modified (N6-acetyllysine). K122 carries the post-translational modification N6-succinyllysine.

As to quaternary structure, homotetramer. Interacts with MPG/AAG, through inhibition of its glycosylase activity it potentially prevents formation of DNA breaks in ssDNA, ensuring that base removal primarily occurs in dsDNA. Interacts with POLDIP2. Interacts with PRIMPOL.

Its subcellular location is the mitochondrion. It is found in the mitochondrion matrix. The protein resides in the mitochondrion nucleoid. Functionally, binds preferentially and cooperatively to pyrimidine rich single-stranded DNA (ss-DNA). In vitro, required to maintain the copy number of mitochondrial DNA (mtDNA) and plays a crucial role during mtDNA replication by stimulating the activity of the replisome components POLG and TWNK at the replication fork. Promotes the activity of the gamma complex polymerase POLG, largely by organizing the template DNA and eliminating secondary structures to favor ss-DNA conformations that facilitate POLG activity. In addition it is able to promote the 5'-3' unwinding activity of the mtDNA helicase TWNK. May also function in mtDNA repair. The chain is Single-stranded DNA-binding protein, mitochondrial (Ssbp1) from Rattus norvegicus (Rat).